A 517-amino-acid chain; its full sequence is Cytochrome P450 1A1 (517 aa).

The segment at 34–45 is mitochondrial targeting signal; sequence WQPRVPKGLKSP. Ser-72 carries an O-linked (GlcNAc) serine glycan. Substrate is bound at residue Phe-229. Residue Cys-462 participates in heme binding.

This sequence belongs to the cytochrome P450 family. Interacts with cytosolic chaperones HSP70 and HSP90; this interaction is required for initial targeting to mitochondria. Interacts (via mitochondrial targeting signal) with TOMM40 (via N-terminus); this interaction is required for translocation across the mitochondrial outer membrane. It depends on heme as a cofactor.

Its subcellular location is the endoplasmic reticulum membrane. The protein localises to the mitochondrion inner membrane. The protein resides in the microsome membrane. It localises to the cytoplasm. It catalyses the reaction an organic molecule + reduced [NADPH--hemoprotein reductase] + O2 = an alcohol + oxidized [NADPH--hemoprotein reductase] + H2O + H(+). The catalysed reaction is estrone + reduced [NADPH--hemoprotein reductase] + O2 = 2-hydroxyestrone + oxidized [NADPH--hemoprotein reductase] + H2O + H(+). It carries out the reaction estrone + reduced [NADPH--hemoprotein reductase] + O2 = 4-hydroxyestrone + oxidized [NADPH--hemoprotein reductase] + H2O + H(+). The enzyme catalyses estrone + reduced [NADPH--hemoprotein reductase] + O2 = 6alpha-hydroxyestrone + oxidized [NADPH--hemoprotein reductase] + H2O + H(+). It catalyses the reaction estrone + reduced [NADPH--hemoprotein reductase] + O2 = 15alpha-hydroxyestrone + oxidized [NADPH--hemoprotein reductase] + H2O + H(+). The catalysed reaction is estrone + reduced [NADPH--hemoprotein reductase] + O2 = 16alpha-hydroxyestrone + oxidized [NADPH--hemoprotein reductase] + H2O + H(+). It carries out the reaction 17beta-estradiol + reduced [NADPH--hemoprotein reductase] + O2 = 2-hydroxy-17beta-estradiol + oxidized [NADPH--hemoprotein reductase] + H2O + H(+). The enzyme catalyses 17beta-estradiol + reduced [NADPH--hemoprotein reductase] + O2 = 4-hydroxy-17beta-estradiol + oxidized [NADPH--hemoprotein reductase] + H2O + H(+). It catalyses the reaction 17beta-estradiol + reduced [NADPH--hemoprotein reductase] + O2 = 6alpha-hydroxy-17beta-estradiol + oxidized [NADPH--hemoprotein reductase] + H2O + H(+). The catalysed reaction is 17beta-estradiol + reduced [NADPH--hemoprotein reductase] + O2 = 7alpha-hydroxy-17beta-estradiol + oxidized [NADPH--hemoprotein reductase] + H2O + H(+). It carries out the reaction 17beta-estradiol + reduced [NADPH--hemoprotein reductase] + O2 = 15alpha-hydroxy-17beta-estradiol + oxidized [NADPH--hemoprotein reductase] + H2O + H(+). The enzyme catalyses (5Z,8Z,11Z)-eicosatrienoate + reduced [NADPH--hemoprotein reductase] + O2 = 19-hydroxy-(5Z,8Z,11Z)-eicosatrienoate + oxidized [NADPH--hemoprotein reductase] + H2O + H(+). It catalyses the reaction (5Z,8Z,11Z,14Z)-eicosatetraenoate + reduced [NADPH--hemoprotein reductase] + O2 = 16-hydroxy-(5Z,8Z,11Z,14Z)-eicosatetraenoate + oxidized [NADPH--hemoprotein reductase] + H2O + H(+). The catalysed reaction is (5Z,8Z,11Z,14Z)-eicosatetraenoate + reduced [NADPH--hemoprotein reductase] + O2 = 17-hydroxy-(5Z,8Z,11Z,14Z)-eicosatetraenoate + oxidized [NADPH--hemoprotein reductase] + H2O + H(+). It carries out the reaction (5Z,8Z,11Z,14Z)-eicosatetraenoate + reduced [NADPH--hemoprotein reductase] + O2 = 18-hydroxy-(5Z,8Z,11Z,14Z)-eicosatetraenoate + oxidized [NADPH--hemoprotein reductase] + H2O + H(+). The enzyme catalyses (5Z,8Z,11Z,14Z)-eicosatetraenoate + reduced [NADPH--hemoprotein reductase] + O2 = 19-hydroxy-(5Z,8Z,11Z,14Z)-eicosatetraenoate + oxidized [NADPH--hemoprotein reductase] + H2O + H(+). It catalyses the reaction (5Z,8Z,11Z,14Z,17Z)-eicosapentaenoate + reduced [NADPH--hemoprotein reductase] + O2 = 19-hydroxy-(5Z,8Z,11Z,14Z,17Z)-eicosapentaenoate + oxidized [NADPH--hemoprotein reductase] + H2O + H(+). The catalysed reaction is (5Z,8Z,11Z,14Z)-eicosatetraenoate + reduced [NADPH--hemoprotein reductase] + O2 = (8R,9S)-epoxy-(5Z,11Z,14Z)-eicosatrienoate + oxidized [NADPH--hemoprotein reductase] + H2O + H(+). It carries out the reaction (5Z,8Z,11Z,14Z)-eicosatetraenoate + reduced [NADPH--hemoprotein reductase] + O2 = (11R,12S)-epoxy-(5Z,8Z,14Z)-eicosatrienoate + oxidized [NADPH--hemoprotein reductase] + H2O + H(+). The enzyme catalyses (5Z,8Z,11Z,14Z)-eicosatetraenoate + reduced [NADPH--hemoprotein reductase] + O2 = (14S,15R)-epoxy-(5Z,8Z,11Z)-eicosatrienoate + oxidized [NADPH--hemoprotein reductase] + H2O + H(+). It catalyses the reaction (5Z,8Z,11Z,14Z)-eicosatetraenoate + reduced [NADPH--hemoprotein reductase] + O2 = (14R,15S)-epoxy-(5Z,8Z,11Z)-eicosatrienoate + oxidized [NADPH--hemoprotein reductase] + H2O + H(+). The catalysed reaction is (5Z,8Z,11Z,14Z,17Z)-eicosapentaenoate + reduced [NADPH--hemoprotein reductase] + O2 = (17R,18S)-epoxy-(5Z,8Z,11Z,14Z)-eicosatetraenoate + oxidized [NADPH--hemoprotein reductase] + H2O + H(+). It carries out the reaction (4Z,7Z,10Z,13Z,16Z,19Z)-docosahexaenoate + reduced [NADPH--hemoprotein reductase] + O2 = (19S,20R)-epoxy-(4Z,7Z,10Z,13Z,16Z)-docosapentaenoate + oxidized [NADPH--hemoprotein reductase] + H2O + H(+). The enzyme catalyses (4Z,7Z,10Z,13Z,16Z,19Z)-docosahexaenoate + reduced [NADPH--hemoprotein reductase] + O2 = (19R,20S)-epoxy-(4Z,7Z,10Z,13Z,16Z)-docosapentaenoate + oxidized [NADPH--hemoprotein reductase] + H2O + H(+). It catalyses the reaction all-trans-retinol + reduced [NADPH--hemoprotein reductase] + O2 = all-trans-retinal + oxidized [NADPH--hemoprotein reductase] + 2 H2O + H(+). The catalysed reaction is all-trans-retinal + reduced [NADPH--hemoprotein reductase] + O2 = all-trans-retinoate + oxidized [NADPH--hemoprotein reductase] + H2O + 2 H(+). It carries out the reaction (13S)-hydroperoxy-(9Z,11E)-octadecadienoate = 13-oxo-(9Z,11E)-octadecadienoate + H2O. The enzyme catalyses (12S)-hydroperoxy-(5Z,8Z,10E,14Z)-eicosatetraenoate = 12-oxo-(5Z,8Z,10E,14Z)-eicosatetraenoate + H2O. It catalyses the reaction (15S)-hydroperoxy-(5Z,8Z,11Z,13E)-eicosatetraenoate = 15-oxo-(5Z,8Z,11Z,13E)-eicosatetraenoate + H2O. The catalysed reaction is (5S)-hydroperoxy-(6E,8Z,11Z,14Z)-eicosatetraenoate = 5-oxo-(6E,8Z,11Z,14Z)-eicosatetraenoate + H2O. Its pathway is steroid hormone biosynthesis. It functions in the pathway lipid metabolism; fatty acid metabolism. The protein operates within cofactor metabolism; retinol metabolism. Functionally, a cytochrome P450 monooxygenase involved in the metabolism of various endogenous substrates, including fatty acids, steroid hormones and vitamins. Mechanistically, uses molecular oxygen inserting one oxygen atom into a substrate, and reducing the second into a water molecule, with two electrons provided by NADPH via cytochrome P450 reductase (CPR; NADPH-ferrihemoprotein reductase). Catalyzes the hydroxylation of carbon-hydrogen bonds. Exhibits high catalytic activity for the formation of hydroxyestrogens from estrone (E1) and 17beta-estradiol (E2), namely 2-hydroxy E1 and E2, as well as D-ring hydroxylated E1 and E2 at the C15alpha and C16alpha positions. Displays different regioselectivities for polyunsaturated fatty acids (PUFA) hydroxylation. Catalyzes the epoxidation of double bonds of certain PUFA. Converts arachidonic acid toward epoxyeicosatrienoic acid (EET) regioisomers, 8,9-, 11,12-, and 14,15-EET, that function as lipid mediators in the vascular system. Displays an absolute stereoselectivity in the epoxidation of eicosapentaenoic acid (EPA) producing the 17(R),18(S) enantiomer. May play an important role in all-trans retinoic acid biosynthesis in extrahepatic tissues. Catalyzes two successive oxidative transformation of all-trans retinol to all-trans retinal and then to the active form all-trans retinoic acid. May also participate in eicosanoids metabolism by converting hydroperoxide species into oxo metabolites (lipoxygenase-like reaction, NADPH-independent). This Felis catus (Cat) protein is Cytochrome P450 1A1 (CYP1A1).